The primary structure comprises 108 residues: Tetrahydromethanopterin S-methyltransferase subunit B (108 aa).

Residues 80-100 (AFYGIVVGLAFSGLLALIIFI) traverse the membrane as a helical segment.

This sequence belongs to the MtrB family. In terms of assembly, the complex is composed of 8 subunits; MtrA, MtrB, MtrC, MtrD, MtrE, MtrF, MtrG and MtrH.

Its subcellular location is the cell membrane. The enzyme catalyses 5-methyl-5,6,7,8-tetrahydromethanopterin + coenzyme M + 2 Na(+)(in) = 5,6,7,8-tetrahydromethanopterin + methyl-coenzyme M + 2 Na(+)(out). The protein operates within one-carbon metabolism; methanogenesis from CO(2); methyl-coenzyme M from 5,10-methylene-5,6,7,8-tetrahydromethanopterin: step 2/2. Its function is as follows. Part of a complex that catalyzes the formation of methyl-coenzyme M and tetrahydromethanopterin from coenzyme M and methyl-tetrahydromethanopterin. This is an energy-conserving, sodium-ion translocating step. The protein is Tetrahydromethanopterin S-methyltransferase subunit B of Methanosarcina acetivorans (strain ATCC 35395 / DSM 2834 / JCM 12185 / C2A).